Here is a 249-residue protein sequence, read N- to C-terminus: Type I iodothyronine deiodinase (249 aa).

Residues 1–12 (MGLPRPGLWLKR) are Extracellular-facing. Residues 13 to 33 (LWVLVQVAVEVAVGKVLMTLF) form a helical; Signal-anchor for type III membrane protein membrane-spanning segment. Over 34 to 249 (PERVKQNILA…VRAVLEELHS (216 aa)) the chain is Cytoplasmic. Residue U126 is part of the active site. A non-standard amino acid (selenocysteine) is located at residue U126.

This sequence belongs to the iodothyronine deiodinase family. As to quaternary structure, predominantly monomer. Can form homodimers but homodimerization is not essential for enzyme activity.

The protein localises to the cell membrane. The protein resides in the endoplasmic reticulum membrane. It localises to the basolateral cell membrane. The enzyme catalyses 3,3',5-triiodo-L-thyronine + iodide + A + H(+) = L-thyroxine + AH2. It carries out the reaction 3,3',5'-triiodo-L-thyronine + iodide + A + H(+) = L-thyroxine + AH2. It catalyses the reaction 3,3'-diiodo-L-thyronine + iodide + A + H(+) = 3,3',5'-triiodo-L-thyronine + AH2. The catalysed reaction is 3,3'-diiodo-L-thyronine + iodide + A + H(+) = 3,3',5-triiodo-L-thyronine + AH2. The enzyme catalyses 3'-iodo-L-thyronine + iodide + A + H(+) = 3',5'-diiodo-L-thyronine + AH2. It carries out the reaction 3-iodo-L-thyronine + iodide + A + H(+) = 3,5-diiodo-L-thyronine + AH2. It catalyses the reaction 3-iodo-L-thyronine + iodide + A + H(+) = 3,3'-diiodo-L-thyronine + AH2. The catalysed reaction is 3,3'-diiodothyronamine + iodide + A + H(+) = 3,3',5'-triiodothyronamine + AH2. The enzyme catalyses 3'-iodothyronamine + iodide + A + H(+) = 3',5'-diiodothyronamine + AH2. It carries out the reaction 3-iodothyronamine + iodide + A + H(+) = 3,3'-diiodothyronamine + AH2. It catalyses the reaction 3,3'-diiodothyronamine + iodide + A + H(+) = 3,3',5-triiodothyronamine + AH2. The catalysed reaction is 3-iodothyronamine + iodide + A + H(+) = 3,5-diiodothyronamine + AH2. The enzyme catalyses 3,3'-diiodo-L-thyronine sulfate + iodide + A + H(+) = 3,3',5'-triiodo-L-thyronine sulfate + AH2. It carries out the reaction 3,3',5'-triiodo-L-thyronine sulfate + iodide + A + H(+) = L-thyroxine sulfate + AH2. It catalyses the reaction 3,3'-diiodo-L-thyronine sulfate + iodide + A + H(+) = 3,3',5-triiodo-L-thyronine sulfate + AH2. Its function is as follows. Plays a crucial role in the metabolism of thyroid hormones (TH) and has specific roles in TH activation and inactivation by deiodination. Catalyzes the deiodination of L-thyroxine (T4) to 3,5,3'-triiodothyronine (T3) via outer-ring deiodination (ORD) and of T4 to 3,3',5'-triiodothyronine (rT3) via inner-ring deiodination (IRD). Catalyzes the deiodiantion of rT3 to 3,3'-diiodothyronine (3,3'-T2) and 3',5'-diiodothyronine (3',5'-T2) to 3'-monoiodothyronine (3'-T1) via ORD. Catalyzes the deiodination of T3 to 3,3'-T2, 3,5-diiodothyronine (3,5-T2) to 3-monoiodothyronine (3-T1) and 3,3'-T2 to 3-T1 via IRD. Catalyzes the phenolic ring deiodinations of 3,3',5'-triiodothyronamine, 3',5'-diiodothyronamine and 3,3'-diiodothyronamine as well as tyrosyl ring deiodinations of 3,5,3'-triiodothyronamine and 3,5-diiodothyronamine. Catalyzes the deiodination of L-thyroxine sulfate and 3,3',5-triiodo-L-thyronine sulfate via IRD and of 3,3',5'-triiodo-L-thyronine sulfate via ORD. In Oryctolagus cuniculus (Rabbit), this protein is Type I iodothyronine deiodinase (DIO1).